The sequence spans 91 residues: Small ribosomal subunit protein uS15 (91 aa).

The protein belongs to the universal ribosomal protein uS15 family. Part of the 30S ribosomal subunit. Forms a bridge to the 50S subunit in the 70S ribosome, contacting the 23S rRNA.

Functionally, one of the primary rRNA binding proteins, it binds directly to 16S rRNA where it helps nucleate assembly of the platform of the 30S subunit by binding and bridging several RNA helices of the 16S rRNA. In terms of biological role, forms an intersubunit bridge (bridge B4) with the 23S rRNA of the 50S subunit in the ribosome. The protein is Small ribosomal subunit protein uS15 of Synechococcus sp. (strain JA-3-3Ab) (Cyanobacteria bacterium Yellowstone A-Prime).